The sequence spans 276 residues: SKA complex subunit 1 homolog (276 aa).

Residues 48-78 are a coiled coil; that stretch reads VDVSLTAMEAQLQAVRRRLQEEREAFPKAKK.

The protein belongs to the SKA1 family.

This is SKA complex subunit 1 homolog from Oryza sativa subsp. japonica (Rice).